The chain runs to 107 residues: UPF0145 protein YbjQ (107 aa).

This sequence belongs to the UPF0145 family.

This chain is UPF0145 protein YbjQ, found in Escherichia coli O139:H28 (strain E24377A / ETEC).